Consider the following 263-residue polypeptide: Hydroxyethylthiazole kinase 1 (263 aa).

M42 contributes to the substrate binding site. The ATP site is built by K118 and T164. Residue G191 participates in substrate binding.

The protein belongs to the Thz kinase family. It depends on Mg(2+) as a cofactor.

It catalyses the reaction 5-(2-hydroxyethyl)-4-methylthiazole + ATP = 4-methyl-5-(2-phosphooxyethyl)-thiazole + ADP + H(+). It functions in the pathway cofactor biosynthesis; thiamine diphosphate biosynthesis; 4-methyl-5-(2-phosphoethyl)-thiazole from 5-(2-hydroxyethyl)-4-methylthiazole: step 1/1. Its function is as follows. Catalyzes the phosphorylation of the hydroxyl group of 4-methyl-5-beta-hydroxyethylthiazole (THZ). The sequence is that of Hydroxyethylthiazole kinase 1 from Clostridium botulinum (strain 657 / Type Ba4).